Reading from the N-terminus, the 326-residue chain is UDP-N-acetylglucosamine transporter (326 aa).

Helical transmembrane passes span 4 to 24, 38 to 58, 136 to 156, 174 to 194, 212 to 232, 243 to 263, 269 to 289, and 293 to 313; these read NLKY…VLTM, LSST…IFLV, LGMY…FVQW, FVGL…GVYF, LGFF…GELV, QLTW…AAVI, ILKG…SYFW, and FVPT…TFLY.

This sequence belongs to the nucleotide-sugar transporter family. SLC35A subfamily. Interacts with SLC35A2; the interaction is reduced in the presence of SLC35A4. Found in a complex with SLC35A2 and SLC35A4. Interacts with MGAT4B. O-Glcnacylation regulates the stability of SLC35A3 and the specific complex formation with MGAT4B.

The protein resides in the golgi apparatus membrane. It catalyses the reaction UMP(out) + UDP-N-acetyl-alpha-D-glucosamine(in) = UMP(in) + UDP-N-acetyl-alpha-D-glucosamine(out). Transports diphosphate-N-acetylglucosamine (UDP-GlcNAc) from the cytosol into the lumen of the Golgi apparatus, functioning as an antiporter that exchanges UDP-N-acetyl-alpha-D-glucosamine for UMP. May supply UDP-GlcNAc as substrate for Golgi-resident glycosyltransferases that generate highly branched, multiantennary complex N-glycans and keratan sulfate. However, the exact role of SLC35A3 still needs to be elucidated, it could be a member of a catalytically more efficient multiprotein complex rather than function independently as a single transporter. The chain is UDP-N-acetylglucosamine transporter (Slc35a3) from Rattus norvegicus (Rat).